A 345-amino-acid polypeptide reads, in one-letter code: Biotin synthase (345 aa).

The region spanning 38-256 (RQVQVSTLLS…IAVARIMMPA (219 aa)) is the Radical SAM core domain. Cys53, Cys57, and Cys60 together coordinate [4Fe-4S] cluster. Residues Cys97, Cys128, Cys188, and Arg260 each contribute to the [2Fe-2S] cluster site.

The protein belongs to the radical SAM superfamily. Biotin synthase family. As to quaternary structure, homodimer. Requires [4Fe-4S] cluster as cofactor. The cofactor is [2Fe-2S] cluster.

It catalyses the reaction (4R,5S)-dethiobiotin + (sulfur carrier)-SH + 2 reduced [2Fe-2S]-[ferredoxin] + 2 S-adenosyl-L-methionine = (sulfur carrier)-H + biotin + 2 5'-deoxyadenosine + 2 L-methionine + 2 oxidized [2Fe-2S]-[ferredoxin]. It participates in cofactor biosynthesis; biotin biosynthesis; biotin from 7,8-diaminononanoate: step 2/2. Functionally, catalyzes the conversion of dethiobiotin (DTB) to biotin by the insertion of a sulfur atom into dethiobiotin via a radical-based mechanism. The polypeptide is Biotin synthase (Serratia proteamaculans (strain 568)).